The primary structure comprises 512 residues: Monocarboxylate transporter 14 (512 aa).

At 1–29 (MYTSHEDIGYDLEDDRKAKNKKTLKPHPD) the chain is on the cytoplasmic side. Helical transmembrane passes span 30–50 (IDGGWAWMMVLSSFFVHILIM), 76–96 (WVSSLSMGITLIVGPFIGLFI), 105–125 (AIIGGLVNSLGWVLSAYAANV), 129–149 (FITFGVAAGLGSGMAYLPAVV), 161–181 (LAQGLSTTGTGFGTFLMTVLL), 193–211 (AMFIQGALSLNLCVCGALM), 317–337 (MFVAFIFWALFAYSSFVIPFI), 355–375 (FPLTSIIAILHIFGKVILGAV), 381–401 (ISVWNVFLIANFTLVLSIFLL), 410–430 (LAVICALIGFSSGYFSLMPVV), 446–466 (IIICANGISALLGPPFAGWIF), and 476–496 (FYICGLLYMVGILFLLIQPCI). Residues 497–512 (QMIDQSRRKCIEGAHV) lie on the Cytoplasmic side of the membrane.

Belongs to the major facilitator superfamily. Monocarboxylate porter (TC 2.A.1.13) family.

It localises to the cell membrane. Proton-linked monocarboxylate transporter. May catalyze the transport of monocarboxylates across the plasma membrane. The chain is Monocarboxylate transporter 14 (Slc16a14) from Mus musculus (Mouse).